The following is a 151-amino-acid chain: MSKPSSCKAYLGIDYGKKRIGLAYAAEPLLLTLPIGNIEAGKNLKLSAEALHKIILSRNITCVVLGNPLPMQKGLYSSLQEEVSLLAEELKKLSTVEIILWDERLSSVQAERMLKQDCGLSRKDRKGKTDSLAATLILTSFLDSLPKKLTL.

Belongs to the YqgF nuclease family.

The protein resides in the cytoplasm. Functionally, could be a nuclease involved in processing of the 5'-end of pre-16S rRNA. The polypeptide is Putative pre-16S rRNA nuclease (Chlamydia pneumoniae (Chlamydophila pneumoniae)).